We begin with the raw amino-acid sequence, 428 residues long: Homoserine dehydrogenase (428 aa).

NADPH is bound by residues Phe-10, Thr-12, Val-13, Arg-44, and Lys-106. Val-13 contacts NAD(+). Residues Val-13, Arg-44, and Lys-106 each coordinate NADP(+). Na(+)-binding residues include Glu-130, Val-133, Gly-135, and Ile-137. The NADP(+) site is built by Gly-188 and Glu-191. L-homoserine-binding residues include Glu-191 and Asp-202. Lys-206 (proton donor) is an active-site residue. An NADPH-binding site is contributed by Gly-303. Residue Gly-303 coordinates NAD(+). Gly-303 provides a ligand contact to NADP(+). The ACT domain maps to 351–425; sequence YFSVETPDST…DFKLLNYFKV (75 aa).

It belongs to the homoserine dehydrogenase family. Requires a metal cation as cofactor.

The catalysed reaction is L-homoserine + NADP(+) = L-aspartate 4-semialdehyde + NADPH + H(+). It catalyses the reaction L-homoserine + NAD(+) = L-aspartate 4-semialdehyde + NADH + H(+). The protein operates within amino-acid biosynthesis; L-methionine biosynthesis via de novo pathway; L-homoserine from L-aspartate: step 3/3. It participates in amino-acid biosynthesis; L-threonine biosynthesis; L-threonine from L-aspartate: step 3/5. Catalyzes the conversion of L-aspartate-beta-semialdehyde (L-Asa) to L-homoserine (L-Hse), the third step in the biosynthesis of threonine and methionine from aspartate. The chain is Homoserine dehydrogenase (hom) from Lactococcus lactis subsp. lactis (strain IL1403) (Streptococcus lactis).